A 707-amino-acid polypeptide reads, in one-letter code: Caprin-1 (707 aa).

Composition is skewed to low complexity over residues 1–15 (MPSA…SKSS) and 22–43 (GSSG…PATG). The disordered stretch occupies residues 1 to 48 (MPSATSHSGSGSKSSGPPPPSGSSGSEAAAGAAAPASQHPATGTGAVQ). Position 2 is an N-acetylproline (Pro2). A Phosphoserine modification is found at Ser10. Positions 58–92 (VIDKKLRNLEKKKGKLDDYQERMNKGERLNQDQLD) form a coiled coil. A Phosphoserine modification is found at Ser113. A coiled-coil region spans residues 123-151 (KTIKKTARREQLMREEAEQKRLKTVLELQ). An Omega-N-methylarginine modification is found at Arg163. Residues 325–347 (LQQQPQAASPSVPEPHSLTPVAQ) are disordered. Positions 326-335 (QQQPQAASPS) are enriched in low complexity. Ser333 and Ser341 each carry phosphoserine. The interval 358 to 379 (QDLMAQMQGPYNFIQDSMLDFE) is G3BP1-binding. 3 disordered regions span residues 412 to 443 (ESRL…YTAS), 523 to 558 (PVPP…EQTE), and 570 to 620 (TYHG…RGLM). Residues 431–443 (PLVSSTSEGYTAS) are compositionally biased toward polar residues. A compositionally biased stretch (low complexity) spans 535–558 (QQSQYQASYNQSFSSQPHQVEQTE). Residues 572-603 (HGSQDQPHQVPGNHQQPPQQSTGFPRSSQPYY) show a composition bias toward polar residues. Tyr623 bears the Phosphotyrosine mark. An omega-N-methylarginine mark is found at Arg624 and Arg631. Phosphotyrosine is present on residues Tyr634 and Tyr637. An Omega-N-methylarginine modification is found at Arg638. The span at 641-655 (FSNTPNSGYTQSQFN) shows a compositional bias: polar residues. The interval 641-707 (FSNTPNSGYT…MPQMNTQQVN (67 aa)) is disordered. O-linked (GlcNAc) serine glycans are attached at residues Ser642 and Ser647. Phosphotyrosine is present on residues Tyr649, Tyr660, Tyr663, and Tyr668. Composition is skewed to low complexity over residues 674 to 684 (RGSGQSGPRGA) and 695 to 707 (NRGM…QQVN). At Arg696 the chain carries Asymmetric dimethylarginine; alternate. Position 696 is an omega-N-methylarginine; alternate (Arg696).

It belongs to the caprin family. May form homomultimers. Interacts with G3BP1; interaction is direct and promotes stress granule formation. Interacts with G3BP2; interaction is direct and promotes stress granule formation. Interacts with PQBP1. Interacts with DDX3X. Interacts (when phosphorylated by EPHA4) with FMR1; interaction with FMR1 promotes formation of a membraneless compartment. Post-translationally, tyrosine phosphorylation by EPHA4 promotes interaction with FMR1 and liquid-liquid phase separation (LLPS) for the formation of a membraneless compartment that concentrates mRNAs with associated regulatory factors. O-glycosylated (O-GlcNAcylated), in a cell cycle-dependent manner. O-glycosylation by OGT inhibit ability to undergo liquid-liquid phase separation (LLPS). In terms of tissue distribution, expressed in hippocampal and neocortical pyramidal neurons, but not in Purkinje cells.

Its subcellular location is the cytoplasm. The protein resides in the cytoplasmic ribonucleoprotein granule. It localises to the cytosol. It is found in the cell projection. The protein localises to the dendrite. Its subcellular location is the lamellipodium. Its activity is regulated as follows. Ability to mediate liquid-liquid phase separation is regulated by ATP: moderate concentrations of ATP enhance phase separation, whereas high concentrations of ATP lead to inhibition of phase separation. In terms of biological role, mRNA-binding protein that acts as a regulator of mRNAs transport, translation and/or stability, and which is involved in neurogenesis, synaptic plasticity in neurons and cell proliferation and migration in multiple cell types. Plays an essential role in cytoplasmic stress granule formation. Acts as an mRNA regulator by mediating formation of some phase-separated membraneless compartment: undergoes liquid-liquid phase separation upon binding to target mRNAs, leading to assemble mRNAs into cytoplasmic ribonucleoprotein granules that concentrate mRNAs with associated regulatory factors. Undergoes liquid-liquid phase separation following phosphorylation and interaction with FMR1, promoting formation of cytoplasmic ribonucleoprotein granules that concentrate mRNAs with factors that inhibit translation and mediate deadenylation of target mRNAs. In these cytoplasmic ribonucleoprotein granules, CAPRIN1 mediates recruitment of CNOT7 deadenylase, leading to mRNA deadenylation and degradation. Binds directly and selectively to MYC and CCND2 mRNAs. In neuronal cells, directly binds to several mRNAs associated with RNA granules, including BDNF, CAMK2A, CREB1, MAP2, NTRK2 mRNAs, as well as to GRIN1 and KPNB1 mRNAs, but not to rRNAs. The polypeptide is Caprin-1 (Caprin1) (Rattus norvegicus (Rat)).